The primary structure comprises 457 residues: Bifunctional F420 biosynthesis protein FbiB (457 aa).

A coenzyme F420:L-glutamate ligase region spans residues 1–253 (MTSSDSHRSA…NGPDDLFWLG (253 aa)). GTP is bound by residues 29–32 (LPEF), Ser-59, and Lys-64. A divalent metal cation is bound at residue Asp-118. Asn-121 contacts GTP. A divalent metal cation contacts are provided by Asp-159 and Thr-160. Residues 254–457 (TTEALELGRQ…VRVADLLLRK (204 aa)) are dehydro-coenzyme F420-0 reductase. Residues 269–273 (RRSVR) and Ala-297 contribute to the FMN site. Residue Asp-329 participates in coenzyme F420-(gamma-Glu)n binding. Residues Gly-408 and Arg-445 each contribute to the FMN site.

The protein in the N-terminal section; belongs to the CofE family. The cofactor is Mg(2+). Mn(2+) serves as cofactor. K(+) is required as a cofactor.

It carries out the reaction oxidized coenzyme F420-0 + GTP + L-glutamate = oxidized coenzyme F420-1 + GDP + phosphate + H(+). The enzyme catalyses oxidized coenzyme F420-1 + GTP + L-glutamate = oxidized coenzyme F420-2 + GDP + phosphate + H(+). It catalyses the reaction oxidized coenzyme F420-(gamma-L-Glu)(n) + GTP + L-glutamate = oxidized coenzyme F420-(gamma-L-Glu)(n+1) + GDP + phosphate + H(+). The catalysed reaction is oxidized coenzyme F420-0 + FMN + H(+) = dehydro coenzyme F420-0 + FMNH2. It participates in cofactor biosynthesis; coenzyme F420 biosynthesis. Bifunctional enzyme that catalyzes the GTP-dependent successive addition of multiple gamma-linked L-glutamates to the L-lactyl phosphodiester of 7,8-didemethyl-8-hydroxy-5-deazariboflavin (F420-0) to form polyglutamated F420 derivatives, and the FMNH2-dependent reduction of dehydro-F420-0 to form F420-0. The chain is Bifunctional F420 biosynthesis protein FbiB from Mycobacterium leprae (strain TN).